Reading from the N-terminus, the 124-residue chain is Fluoride-specific ion channel FluC 1 (124 aa).

4 consecutive transmembrane segments (helical) span residues 1 to 21 (MCAV…ALGA), 30 to 50 (LWPG…LLGY), 64 to 84 (FLGV…VDAV), and 93 to 113 (LYVV…MLAG). Na(+) is bound by residues G71 and T74.

The protein belongs to the fluoride channel Fluc/FEX (TC 1.A.43) family.

It localises to the cell membrane. It catalyses the reaction fluoride(in) = fluoride(out). Its activity is regulated as follows. Na(+) is not transported, but it plays an essential structural role and its presence is essential for fluoride channel function. Functionally, fluoride-specific ion channel. Important for reducing fluoride concentration in the cell, thus reducing its toxicity. This is Fluoride-specific ion channel FluC 1 from Rhodococcus jostii (strain RHA1).